We begin with the raw amino-acid sequence, 134 residues long: Cytochrome b5 isoform B (134 aa).

The 77-residue stretch at 5–81 (AKIFTLSEVS…MEQYYVGEID (77 aa)) folds into the Cytochrome b5 heme-binding domain. The heme site is built by His40 and His64. A helical transmembrane segment spans residues 107-127 (FIIKLLQFLVPLAILGLAVGI).

The protein belongs to the cytochrome b5 family. In terms of assembly, interacts with CER1, FAH1, FAH2 and BI-1.

The protein resides in the endoplasmic reticulum membrane. Membrane bound hemoprotein which function as an electron carrier for several membrane bound oxygenases, including fatty acid desaturases. The polypeptide is Cytochrome b5 isoform B (Arabidopsis thaliana (Mouse-ear cress)).